A 426-amino-acid polypeptide reads, in one-letter code: Histidine--tRNA ligase (426 aa).

The protein belongs to the class-II aminoacyl-tRNA synthetase family. Homodimer.

The protein resides in the cytoplasm. The catalysed reaction is tRNA(His) + L-histidine + ATP = L-histidyl-tRNA(His) + AMP + diphosphate + H(+). The chain is Histidine--tRNA ligase (hisS) from Streptococcus dysgalactiae subsp. equisimilis (Streptococcus equisimilis).